We begin with the raw amino-acid sequence, 224 residues long: MNILIFGPPGSGKSTHSRRIVEEYGLTYISSGDLIRGEIERKSSLGLEMAAYLSRGDLIPDTIVNTLIISRLRRQRENFILDGYPRTPEQVIALENYLYDHGIRLDLALEIFIDEDTSVERISGRRICPNCGAVYHITYNPPKVPGICDVCGTKLIQRTDDREEVVRKRYRIYIKNMEPIIKFYRAKGIYVRVDGDGLIPDVWKRIKPLLDYIHEREKKRKEHE.

10–15 contributes to the ATP binding site; it reads GSGKST. Positions 30–59 are NMP; the sequence is SSGDLIRGEIERKSSLGLEMAAYLSRGDLI. AMP is bound by residues Ser-31, Arg-36, 57–59, 83–86, and Gln-90; these read DLI and GYPR. The segment at 124–161 is LID; the sequence is GRRICPNCGAVYHITYNPPKVPGICDVCGTKLIQRTDD. Arg-125 contacts ATP. Zn(2+)-binding residues include Cys-128 and Cys-131. 134-135 lines the ATP pocket; that stretch reads VY. Zn(2+)-binding residues include Cys-148 and Cys-151. Residues Arg-158 and Arg-169 each coordinate AMP. Position 197 (Gly-197) interacts with ATP.

Belongs to the adenylate kinase family. In terms of assembly, monomer.

It localises to the cytoplasm. The catalysed reaction is AMP + ATP = 2 ADP. It participates in purine metabolism; AMP biosynthesis via salvage pathway; AMP from ADP: step 1/1. Its function is as follows. Catalyzes the reversible transfer of the terminal phosphate group between ATP and AMP. Plays an important role in cellular energy homeostasis and in adenine nucleotide metabolism. The protein is Adenylate kinase of Thermococcus gammatolerans (strain DSM 15229 / JCM 11827 / EJ3).